Consider the following 457-residue polypeptide: Bifunctional protein GlmU (457 aa).

The pyrophosphorylase stretch occupies residues 1–227 (MTQLSVVILA…FMEVEGANNR (227 aa)). UDP-N-acetyl-alpha-D-glucosamine-binding positions include 9-12 (LAAG), lysine 23, glutamine 74, 79-80 (GT), 101-103 (YGD), glycine 138, glutamate 152, asparagine 167, and asparagine 225. Aspartate 103 provides a ligand contact to Mg(2+). Position 225 (asparagine 225) interacts with Mg(2+). Residues 228–248 (LQLAALERFYQKTQAEKLLLA) are linker. Residues 249-457 (GVRLIDPARF…QRPTKKKIAD (209 aa)) are N-acetyltransferase. Residues arginine 331 and lysine 349 each coordinate UDP-N-acetyl-alpha-D-glucosamine. Residue histidine 361 is the Proton acceptor of the active site. The UDP-N-acetyl-alpha-D-glucosamine site is built by tyrosine 364 and asparagine 375. Residues alanine 378, 384–385 (NY), serine 403, alanine 421, and arginine 438 contribute to the acetyl-CoA site.

In the N-terminal section; belongs to the N-acetylglucosamine-1-phosphate uridyltransferase family. The protein in the C-terminal section; belongs to the transferase hexapeptide repeat family. Homotrimer. The cofactor is Mg(2+).

Its subcellular location is the cytoplasm. It catalyses the reaction alpha-D-glucosamine 1-phosphate + acetyl-CoA = N-acetyl-alpha-D-glucosamine 1-phosphate + CoA + H(+). The catalysed reaction is N-acetyl-alpha-D-glucosamine 1-phosphate + UTP + H(+) = UDP-N-acetyl-alpha-D-glucosamine + diphosphate. It functions in the pathway nucleotide-sugar biosynthesis; UDP-N-acetyl-alpha-D-glucosamine biosynthesis; N-acetyl-alpha-D-glucosamine 1-phosphate from alpha-D-glucosamine 6-phosphate (route II): step 2/2. Its pathway is nucleotide-sugar biosynthesis; UDP-N-acetyl-alpha-D-glucosamine biosynthesis; UDP-N-acetyl-alpha-D-glucosamine from N-acetyl-alpha-D-glucosamine 1-phosphate: step 1/1. The protein operates within bacterial outer membrane biogenesis; LPS lipid A biosynthesis. Catalyzes the last two sequential reactions in the de novo biosynthetic pathway for UDP-N-acetylglucosamine (UDP-GlcNAc). The C-terminal domain catalyzes the transfer of acetyl group from acetyl coenzyme A to glucosamine-1-phosphate (GlcN-1-P) to produce N-acetylglucosamine-1-phosphate (GlcNAc-1-P), which is converted into UDP-GlcNAc by the transfer of uridine 5-monophosphate (from uridine 5-triphosphate), a reaction catalyzed by the N-terminal domain. The chain is Bifunctional protein GlmU from Actinobacillus pleuropneumoniae serotype 5b (strain L20).